Consider the following 401-residue polypeptide: Imidazolonepropionase (401 aa).

Residues histidine 66 and histidine 68 each contribute to the Fe(3+) site. Histidine 66 and histidine 68 together coordinate Zn(2+). Positions 75, 138, and 171 each coordinate 4-imidazolone-5-propanoate. Tyrosine 138 contributes to the N-formimidoyl-L-glutamate binding site. Histidine 236 is a binding site for Fe(3+). Histidine 236 is a Zn(2+) binding site. Glutamine 239 contributes to the 4-imidazolone-5-propanoate binding site. Aspartate 311 is a binding site for Fe(3+). Aspartate 311 contributes to the Zn(2+) binding site. N-formimidoyl-L-glutamate-binding residues include asparagine 313 and glycine 315. Threonine 316 provides a ligand contact to 4-imidazolone-5-propanoate.

This sequence belongs to the metallo-dependent hydrolases superfamily. HutI family. It depends on Zn(2+) as a cofactor. Fe(3+) is required as a cofactor.

Its subcellular location is the cytoplasm. It catalyses the reaction 4-imidazolone-5-propanoate + H2O = N-formimidoyl-L-glutamate. It functions in the pathway amino-acid degradation; L-histidine degradation into L-glutamate; N-formimidoyl-L-glutamate from L-histidine: step 3/3. Functionally, catalyzes the hydrolytic cleavage of the carbon-nitrogen bond in imidazolone-5-propanoate to yield N-formimidoyl-L-glutamate. It is the third step in the universal histidine degradation pathway. This chain is Imidazolonepropionase, found in Pseudomonas putida (strain ATCC 700007 / DSM 6899 / JCM 31910 / BCRC 17059 / LMG 24140 / F1).